Here is a 341-residue protein sequence, read N- to C-terminus: Probable GDP-mannose transporter 2 (341 aa).

Residues 1-11 (MSKHKHEWTES) lie on the Cytoplasmic side of the membrane. The chain crosses the membrane as a helical span at residues 12 to 32 (VANSGPASILSYCASSILMTV). The Lumenal segment spans residues 33 to 46 (TNKFVVNLDNFNMN). The chain crosses the membrane as a helical span at residues 47 to 67 (FVMLFVQSLVCTVTLCILRIV). The Cytoplasmic portion of the chain corresponds to 68 to 85 (GVANFRSLNRTDVKNWFP). Residues 86–106 (ISLLLVLMIYTSLKSLQYLAV) traverse the membrane as a helical segment. Proline 107 is a topological domain (lumenal). A helical transmembrane segment spans residues 108–128 (IYTIFKNLTIILIAYGEVLFF). Residues 129 to 139 (GGKVTSMELTS) are Cytoplasmic-facing. The helical transmembrane segment at 140 to 160 (FIMMVLSSVVATWGDQQAIAI) threads the bilayer. Over 161-176 (KASSLEDLDQELVEST) the chain is Lumenal. The chain crosses the membrane as a helical span at residues 177–197 (IFVLNPGYLWMFTNCISSALF). Residues 198-214 (VLIMRKRIRLTNFKDYD) are Cytoplasmic-facing. Residues 215–235 (TMFYNNVLALPLLLVFSFIME) traverse the membrane as a helical segment. The Lumenal segment spans residues 236 to 251 (DWSTKNLSVNLSADSL). N-linked (GlcNAc...) asparagine glycans are attached at residues asparagine 241 and asparagine 245. The helical transmembrane segment at 252-272 (AAMVISGLMSVGISYCSGWCV) threads the bilayer. The Cytoplasmic segment spans residues 273–278 (RVTSST). A helical transmembrane segment spans residues 279–299 (TYSMVGALNKLPIALAGLVFF). Over 300 to 303 (DAPK) the chain is Lumenal. Residues 304–324 (NFLSFFSIFLGFLSGLLYAVA) form a helical membrane-spanning segment. The Cytoplasmic segment spans residues 325 to 341 (KQKKIQQQKVLAATLEK).

It belongs to the TPT transporter family. SLC35D subfamily.

It is found in the golgi apparatus membrane. It localises to the cytoplasmic vesicle membrane. The protein localises to the endoplasmic reticulum membrane. Its function is as follows. Involved in the import of GDP-mannose from the cytoplasm into the Golgi lumen. The chain is Probable GDP-mannose transporter 2 (HVG1) from Saccharomyces cerevisiae (strain Lalvin EC1118 / Prise de mousse) (Baker's yeast).